The chain runs to 568 residues: Cytosolic purine 5'-nucleotidase (568 aa).

D52 functions as the Nucleophile in the catalytic mechanism. IMP-binding residues include D52 and D54. Mg(2+) is bound by residues D52 and D54. D54 functions as the Proton donor in the catalytic mechanism. The ATP site is built by R144 and N154. Residues R202, D206, K215, T249, N250, S251, and K292 each coordinate IMP. D351 is a binding site for Mg(2+). Residues Q453 and R456 each contribute to the ATP site. Residues 528 to 568 (ISEIKPPNLFPQKPQEITHCHDEDDDEEEEEEEEEEEEEEE) are disordered. The segment at 548–568 (HDEDDDEEEEEEEEEEEEEEE) is required for tetramer assembly. The span at 550 to 568 (EDDDEEEEEEEEEEEEEEE) shows a compositional bias: acidic residues.

It belongs to the 5'(3')-deoxyribonucleotidase family. As to quaternary structure, homotetramer. Requires Mg(2+) as cofactor.

The protein localises to the cytoplasm. It localises to the cytosol. It catalyses the reaction a ribonucleoside 5'-phosphate + H2O = a ribonucleoside + phosphate. The enzyme catalyses a 2'-deoxyribonucleoside + a ribonucleoside 5'-phosphate = a ribonucleoside + a 2'-deoxyribonucleoside 5'-phosphate. It carries out the reaction IMP + H2O = inosine + phosphate. The catalysed reaction is GMP + H2O = guanosine + phosphate. It catalyses the reaction dIMP + H2O = 2'-deoxyinosine + phosphate. The enzyme catalyses dGMP + H2O = 2'-deoxyguanosine + phosphate. It carries out the reaction XMP + H2O = xanthosine + phosphate. The catalysed reaction is inosine + GMP = guanosine + IMP. It catalyses the reaction dGMP + inosine = 2'-deoxyguanosine + IMP. The enzyme catalyses dIMP + inosine = 2'-deoxyinosine + IMP. It carries out the reaction inosine + UMP = uridine + IMP. The catalysed reaction is inosine + CMP = cytidine + IMP. It catalyses the reaction inosine + AMP = IMP + adenosine. Allosterically activated by various compounds including ATP, 2,3-BPG/2,3-Bisphosphoglyceric acid and Ap4A/P1,P4-bis(5'-adenosyl) tetraphosphate. Binding of an allosteric activator is a prerequisiste to magnesium and substrate binding. Inhibited by inorganic phosphate. Broad specificity cytosolic 5'-nucleotidase that catalyzes the dephosphorylation of 6-hydroxypurine nucleoside 5'-monophosphates. In addition, possesses a phosphotransferase activity by which it can transfer a phosphate from a donor nucleoside monophosphate to an acceptor nucleoside, preferably inosine, deoxyinosine and guanosine. Has the highest activities for IMP and GMP followed by dIMP, dGMP and XMP. Could also catalyze the transfer of phosphates from pyrimidine monophosphates but with lower efficiency. Through these activities regulates the purine nucleoside/nucleotide pools within the cell. This Xenopus tropicalis (Western clawed frog) protein is Cytosolic purine 5'-nucleotidase (nt5c2).